Consider the following 122-residue polypeptide: MPTTYYTDDHEWIEVEDDTATIGITKHAAEQLGEVVFIELQPEGETFVKGDEIGVVESVKAASDIFAPVTGEILEANAALVETPAELNEDPEGNSWLYKIKLSDPGELSELLDAEGYAALIG.

Residues 19-101 (TATIGITKHA…EGNSWLYKIK (83 aa)) form the Lipoyl-binding domain. The residue at position 60 (Lys-60) is an N6-lipoyllysine.

Belongs to the GcvH family. As to quaternary structure, the glycine cleavage system is composed of four proteins: P, T, L and H. The cofactor is (R)-lipoate.

In terms of biological role, the glycine cleavage system catalyzes the degradation of glycine. The H protein shuttles the methylamine group of glycine from the P protein to the T protein. The chain is Glycine cleavage system H protein from Dinoroseobacter shibae (strain DSM 16493 / NCIMB 14021 / DFL 12).